A 336-amino-acid polypeptide reads, in one-letter code: tRNA N6-adenosine threonylcarbamoyltransferase (336 aa).

The Fe cation site is built by H114 and H118. Substrate contacts are provided by residues 136-140 (LVSGG), D169, G182, D186, and N275. D301 is a binding site for Fe cation.

It belongs to the KAE1 / TsaD family. Requires Fe(2+) as cofactor.

The protein localises to the cytoplasm. It carries out the reaction L-threonylcarbamoyladenylate + adenosine(37) in tRNA = N(6)-L-threonylcarbamoyladenosine(37) in tRNA + AMP + H(+). Functionally, required for the formation of a threonylcarbamoyl group on adenosine at position 37 (t(6)A37) in tRNAs that read codons beginning with adenine. Is involved in the transfer of the threonylcarbamoyl moiety of threonylcarbamoyl-AMP (TC-AMP) to the N6 group of A37, together with TsaE and TsaB. TsaD likely plays a direct catalytic role in this reaction. This Streptococcus sanguinis (strain SK36) protein is tRNA N6-adenosine threonylcarbamoyltransferase.